The chain runs to 503 residues: Cytochrome P450 7A1 (503 aa).

The chain crosses the membrane as a helical span at residues 4-24; that stretch reads ISLIWGIAVLVSCCIWFIVGI. Heme is bound at residue C444.

This sequence belongs to the cytochrome P450 family. Requires heme as cofactor. In terms of tissue distribution, detected in liver (at protein level). Liver.

The protein localises to the endoplasmic reticulum membrane. Its subcellular location is the microsome membrane. It carries out the reaction cholesterol + reduced [NADPH--hemoprotein reductase] + O2 = 7alpha-hydroxycholesterol + oxidized [NADPH--hemoprotein reductase] + H2O + H(+). The catalysed reaction is 4beta-hydroxycholesterol + reduced [NADPH--hemoprotein reductase] + O2 = 4beta,7alpha-dihydroxycholesterol + oxidized [NADPH--hemoprotein reductase] + H2O + H(+). The enzyme catalyses lathosterol + reduced [NADPH--hemoprotein reductase] + O2 = 7alpha,8alpha-epoxy-5alpha-cholestan-3beta-ol + oxidized [NADPH--hemoprotein reductase] + H2O + H(+). It catalyses the reaction lathosterol + reduced [NADPH--hemoprotein reductase] + O2 = 5alpha-cholestan-7-oxo-3beta-ol + oxidized [NADPH--hemoprotein reductase] + H2O + H(+). It carries out the reaction 7-dehydrocholesterol + reduced [NADPH--hemoprotein reductase] + O2 = 7-oxocholesterol + oxidized [NADPH--hemoprotein reductase] + H2O + H(+). The catalysed reaction is (24S)-hydroxycholesterol + reduced [NADPH--hemoprotein reductase] + O2 = (24S)-7alpha-dihydroxycholesterol + oxidized [NADPH--hemoprotein reductase] + H2O + H(+). The enzyme catalyses (24R)-hydroxycholesterol + reduced [NADPH--hemoprotein reductase] + O2 = (24R)-7alpha-dihydroxycholesterol + oxidized [NADPH--hemoprotein reductase] + H2O + H(+). The protein operates within lipid metabolism; bile acid biosynthesis. It participates in steroid metabolism; cholesterol degradation. A cytochrome P450 monooxygenase involved in the metabolism of endogenous cholesterol and its oxygenated derivatives (oxysterols). Mechanistically, uses molecular oxygen inserting one oxygen atom into a substrate, and reducing the second into a water molecule, with two electrons provided by NADPH via cytochrome P450 reductase (CPR; NADPH-ferrihemoprotein reductase). Functions as a critical regulatory enzyme of bile acid biosynthesis and cholesterol homeostasis. Catalyzes the hydroxylation of carbon hydrogen bond at 7-alpha position of cholesterol, a rate-limiting step in cholesterol catabolism and bile acid biosynthesis. 7-alpha hydroxylates several oxysterols, including 4beta-hydroxycholesterol and 24-hydroxycholesterol. Catalyzes the oxidation of the 7,8 double bond of 7-dehydrocholesterol and lathosterol with direct and predominant formation of the 7-keto derivatives. This is Cytochrome P450 7A1 (Cyp7a1) from Rattus norvegicus (Rat).